The following is a 310-amino-acid chain: Dopamine receptor-interacting protein 1 (310 aa).

As to quaternary structure, interacts with DRD1.

Functionally, could be a regulator of the dopamine receptor signaling pathway. The chain is Dopamine receptor-interacting protein 1 from Homo sapiens (Human).